We begin with the raw amino-acid sequence, 144 residues long: Large ribosomal subunit protein uL15 (144 aa).

The interval 1–48 (MIKLEYLQDPSPRKRRTKLLGRGPSSGHGKTSGRGHKGDGSRSGYKRR) is disordered.

This sequence belongs to the universal ribosomal protein uL15 family. In terms of assembly, part of the 50S ribosomal subunit.

Its function is as follows. Binds to the 23S rRNA. This is Large ribosomal subunit protein uL15 from Chlamydia muridarum (strain MoPn / Nigg).